The sequence spans 647 residues: Sodium/nucleoside cotransporter 1 (647 aa).

At 1–79 the chain is on the cytoplasmic side; sequence MEDNTPRQRD…VRRFCREHTQ (79 aa). Positions 34–58 are disordered; sequence EGRAPGSDSSPAEVGGGWSKAGPEH. Residues 80-103 traverse the membrane as a helical segment; the sequence is LFRWICTGLLCTAFAAFLLIACLL. The Extracellular portion of the chain corresponds to 104-108; the sequence is DFQRA. The helical transmembrane segment at 109 to 127 threads the bilayer; it reads LALFVLFCVVLFFLAHSLL. Over 128–146 the chain is Cytoplasmic; sequence KRLLGPKLLRCVKPLRHPC. The helical transmembrane segment at 147–166 threads the bilayer; sequence LNLWFKRGLALAAFLGLVLW. The Extracellular portion of the chain corresponds to 167–177; that stretch reads LVLDTAQRPEQ. Residues 178–194 traverse the membrane as a helical segment; that stretch reads LVSFGGICVFILLLFAG. Topologically, residues 195–200 are cytoplasmic; it reads SKHHRA. A helical transmembrane segment spans residues 201 to 221; the sequence is VSWRAVSWGLGLQFALGLFVI. Over 222 to 260 the chain is Extracellular; it reads RTEPGFIAFQWLGDQIQIFLSYTEAGSSFVFGEALVKDV. The helical transmembrane segment at 261 to 282 threads the bilayer; the sequence is FAFQVLPIIVFFSCAMSVLYYV. Residues 283-293 are Cytoplasmic-facing; it reads GLMQWVILKIS. A helical membrane pass occupies residues 294-317; that stretch reads WLMQATMGTTATETLSVAGNIFVS. At 318–336 the chain is on the extracellular side; the sequence is QTEAPLLIRPYLADMTLSE. A helical membrane pass occupies residues 337 to 359; the sequence is IHVVMTGGYATIAGSLLGAYISF. The Cytoplasmic portion of the chain corresponds to 360 to 365; the sequence is GIDAAS. The helical transmembrane segment at 366–385 threads the bilayer; the sequence is LIAASVMAAPCALALSKLVY. Residues 386-422 lie on the Extracellular side of the membrane; that stretch reads PEVEESKFKREEGVKLTYGDAQNLLEAASSGAAMSVR. Residues 423–445 form a helical membrane-spanning segment; the sequence is VVTNIAANLIAFLAVLAFINAAL. The Cytoplasmic portion of the chain corresponds to 446 to 456; sequence SWLGDMVDVQG. A helical membrane pass occupies residues 457–478; that stretch reads LSFQLICSYVLRPVAFLMGVAW. Residues 479-533 lie on the Extracellular side of the membrane; it reads EDCPVVAELLGMKLFLNEFVAYQELSGYKQRRLAGAEEWVGSRKQWISVRAEILT. The chain crosses the membrane as a helical span at residues 534 to 557; that stretch reads TYALCGFANFSSIGIMLGGLTSMV. Over 558 to 568 the chain is Cytoplasmic; that stretch reads PQRKGDFSQIV. The helical transmembrane segment at 569-591 threads the bilayer; it reads LRALCTGACVSLVNACVAGILYV. Topologically, residues 592 to 647 are extracellular; the sequence is PRGAEVDCVSFLNTTLSSSSFEVYQCCRQFFQSTSLEFSPEALDNCCRFYNHTICV. 2 N-linked (GlcNAc...) asparagine glycosylation sites follow: N604 and N642.

It belongs to the concentrative nucleoside transporter (CNT) (TC 2.A.41) family. N-glycosylated. N-glycosylation is required for localization to the plasma membrane and the transporter activity.

Its subcellular location is the cell membrane. The protein resides in the apical cell membrane. The catalysed reaction is uridine(out) + Na(+)(out) = uridine(in) + Na(+)(in). It catalyses the reaction thymidine(out) + Na(+)(out) = thymidine(in) + Na(+)(in). It carries out the reaction cytidine(out) + Na(+)(out) = cytidine(in) + Na(+)(in). The enzyme catalyses adenosine(out) + Na(+)(out) = adenosine(in) + Na(+)(in). With respect to regulation, due to its high apparent affinity but slow transport, adenosine could act as a negative regulator of pyrimidine transport under some conditions. Sodium and pyrimidine nucleoside symporter of the plasma membrane that imports uridine, thymidine and cytidine into cells by coupling their transport to the transmembrane sodium electrochemical gradient. Also transports adenosine, an atypical substrate transported with high apparent affinity, but low maximum velocity. Therefore, exhibits the transport characteristics of the nucleoside transport system cit or N2 subtype (N2/cit). Involved in renal nucleoside (re)absorption. The chain is Sodium/nucleoside cotransporter 1 (SLC28A1) from Sus scrofa (Pig).